We begin with the raw amino-acid sequence, 227 residues long: MICOS complex subunit Mic19 (227 aa).

Residue Gly-2 is the site of N-myristoyl glycine attachment. Ser-29 carries the post-translational modification Phosphoserine. The disordered stretch occupies residues 32-57; it reads VIDRMKESSPSGSKSQRYSSVYGASV. Residues 39-50 show a composition bias toward polar residues; sequence SSPSGSKSQRYS. Residue Tyr-49 is modified to Phosphotyrosine. Phosphoserine is present on residues Ser-50, Ser-51, Ser-56, and Ser-58. The segment at 73-92 is disordered; it reads EQAKKESEHQRRLKQARDLE. Lys-142 is subject to N6-acetyllysine. A CHCH domain is found at 180–222; the sequence is HPVCADLQTKILQCYRQNTQQTLSCSALASQYMHCVNHAKQSM. 2 consecutive short sequence motifs (cx9C motif) follow at residues 183–193 and 204–214; these read CADLQTKILQC and CSALASQYMHC. Disulfide bonds link Cys-183/Cys-214 and Cys-193/Cys-204.

The protein belongs to the MICOS complex subunit Mic19 family. Metazoan Mic19 subfamily. In terms of assembly, component of the mitochondrial contact site and cristae organizing system (MICOS) complex, composed of at least MICOS10/MIC10, CHCHD3/MIC19, CHCHD6/MIC25, APOOL/MIC27, IMMT/MIC60, APOO/MIC23/MIC26 and MICOS13/MIC13. This complex was also known under the names MINOS or MitOS complex. The MICOS complex associates with mitochondrial outer membrane proteins SAMM50, MTX1 and MTX2 (together described as components of the mitochondrial outer membrane sorting assembly machinery (SAM) complex) and DNAJC11, mitochondrial inner membrane protein TMEM11 and with HSPA9. The MICOS and SAM complexes together with DNAJC11 are part of a large protein complex spanning both membranes termed the mitochondrial intermembrane space bridging (MIB) complex. Interacts with HSPA1A/HSPA1B and OPA1, preferentially with the soluble OPA1 form.

It is found in the mitochondrion inner membrane. It localises to the cytoplasm. The protein resides in the nucleus. The protein localises to the mitochondrion. Its function is as follows. Component of the MICOS complex, a large protein complex of the mitochondrial inner membrane that plays crucial roles in the maintenance of crista junctions, inner membrane architecture, and formation of contact sites to the outer membrane. Has also been shown to function as a transcription factor which binds to the BAG1 promoter and represses BAG1 transcription. Plays an important role in the maintenance of the MICOS complex stability and the mitochondrial cristae morphology. This Mus musculus (Mouse) protein is MICOS complex subunit Mic19 (Chchd3).